Here is a 420-residue protein sequence, read N- to C-terminus: UDP-N-acetylglucosamine 1-carboxyvinyltransferase (420 aa).

22-23 serves as a coordination point for phosphoenolpyruvate; that stretch reads KN. Residue arginine 93 coordinates UDP-N-acetyl-alpha-D-glucosamine. The active-site Proton donor is cysteine 117. The residue at position 117 (cysteine 117) is a 2-(S-cysteinyl)pyruvic acid O-phosphothioketal. UDP-N-acetyl-alpha-D-glucosamine is bound by residues 122 to 126, aspartate 307, and valine 329; that span reads RPVDL.

This sequence belongs to the EPSP synthase family. MurA subfamily.

The protein localises to the cytoplasm. The enzyme catalyses phosphoenolpyruvate + UDP-N-acetyl-alpha-D-glucosamine = UDP-N-acetyl-3-O-(1-carboxyvinyl)-alpha-D-glucosamine + phosphate. Its pathway is cell wall biogenesis; peptidoglycan biosynthesis. Its function is as follows. Cell wall formation. Adds enolpyruvyl to UDP-N-acetylglucosamine. The chain is UDP-N-acetylglucosamine 1-carboxyvinyltransferase from Hahella chejuensis (strain KCTC 2396).